Reading from the N-terminus, the 297-residue chain is Large ribosomal subunit protein uL3 (297 aa).

2 disordered regions span residues N124–Q143 and M258–E297.

This sequence belongs to the universal ribosomal protein uL3 family. In terms of assembly, part of the 50S ribosomal subunit. Forms a cluster with proteins L14 and L19.

In terms of biological role, one of the primary rRNA binding proteins, it binds directly near the 3'-end of the 23S rRNA, where it nucleates assembly of the 50S subunit. In Mycoplasma mobile (strain ATCC 43663 / 163K / NCTC 11711) (Mesomycoplasma mobile), this protein is Large ribosomal subunit protein uL3.